The following is a 285-amino-acid chain: ATP synthase gamma chain (285 aa).

Belongs to the ATPase gamma chain family. F-type ATPases have 2 components, CF(1) - the catalytic core - and CF(0) - the membrane proton channel. CF(1) has five subunits: alpha(3), beta(3), gamma(1), delta(1), epsilon(1). CF(0) has three main subunits: a, b and c.

It is found in the cell membrane. In terms of biological role, produces ATP from ADP in the presence of a proton gradient across the membrane. The gamma chain is believed to be important in regulating ATPase activity and the flow of protons through the CF(0) complex. This is ATP synthase gamma chain from Lysinibacillus sphaericus (strain C3-41).